The sequence spans 613 residues: Activating transcription factor 3 (613 aa).

Disordered stretches follow at residues 77–115 (RHFN…PSVQ) and 133–218 (KRKL…NKIA). Residues 85–105 (GQSHSQDSSHSSCSGSPLDSP) are compositionally biased toward low complexity. A compositionally biased stretch (polar residues) spans 138-147 (TCDSSSGSEQ). Residues 158–175 (NHNGHSGSSNNYSGSMSN) are compositionally biased toward low complexity. Over residues 178–191 (DLDDDCEESSDDDS) the composition is skewed to acidic residues. Residues 205–268 (EDRRRRRRER…QKLVDMLKSH (64 aa)) enclose the bZIP domain. The tract at residues 207-229 (RRRRRRERNKIAATKCRMKKRER) is basic motif. The interval 233–261 (LIKESEVLDTQNVELKNQVRQLETERQKL) is leucine-zipper. Positions 337–446 (PNGYCKPSPS…SSNATSSTTP (110 aa)) are disordered. The segment covering 356 to 368 (QQQQQQQQQQQPQ) has biased composition (low complexity). Over residues 369–389 (SLNPAGNNVIDQQHANPSPSL) the composition is skewed to polar residues. Over residues 402-446 (GSASNHPSHNNNNNNNNSSGASSNTSNNNSNISSHSSNATSSTTP) the composition is skewed to low complexity.

It belongs to the bZIP family. ATF subfamily. Interacts with Jra/jun; the interaction enhances the DNA-binding activity of Atf3. Moderate expression in some regions of the larval nervous system, the ring gland and imaginal disks. High expression in larval gut, excretory malpighian tubules, salivary glands, and, to a lesser extent, the fat body where levels are approximately 2.5-fold less than the gut.

The protein resides in the nucleus. Its function is as follows. Transcription factor which binds to the cAMP response element (CRE). Regulates metabolic and innate immune homeostasis, possibly by controlling appropriate expression of genes involved in peritrophic matrix composition and ensuring the normal digestive and immune function of the gut. Required for the expression of odorant receptors Or43b and Or47b. This chain is Activating transcription factor 3, found in Drosophila melanogaster (Fruit fly).